Here is a 795-residue protein sequence, read N- to C-terminus: Phenylalanine--tRNA ligase beta subunit (795 aa).

The region spanning 39-148 (AGSFNGVVVG…ADAPLGTDIR (110 aa)) is the tRNA-binding domain. Residues 401-476 (PKRATITLRR…RVYGYNNIPD (76 aa)) form the B5 domain. Positions 454, 460, 463, and 464 each coordinate Mg(2+). Residues 701 to 794 (SRFPANRRDI…LKERFQASLR (94 aa)) enclose the FDX-ACB domain.

This sequence belongs to the phenylalanyl-tRNA synthetase beta subunit family. Type 1 subfamily. Tetramer of two alpha and two beta subunits. Requires Mg(2+) as cofactor.

It localises to the cytoplasm. It catalyses the reaction tRNA(Phe) + L-phenylalanine + ATP = L-phenylalanyl-tRNA(Phe) + AMP + diphosphate + H(+). This is Phenylalanine--tRNA ligase beta subunit from Salmonella paratyphi A (strain ATCC 9150 / SARB42).